Here is a 728-residue protein sequence, read N- to C-terminus: Ribosome biogenesis protein bop1-B (728 aa).

The tract at residues 1-114 (MKRGSKRESG…ENDSSDEEDI (114 aa)) is disordered. Residues 50–67 (SGTDSSDDEEDHSSEEVQ) show a composition bias toward acidic residues. WD repeat units lie at residues 393 to 432 (GHKDLVRCISVSPSGQWLVSGSDDCSVRFWEVSTGRCMKS), 434 to 474 (VLEG…RLLC), 514 to 556 (KHQK…SQNP), 559 to 597 (KNKGQVQKVLFHPTRPFFFVATQRYVRVYNLLKQELTKK), 600 to 639 (TNCKWVSSIAVHPAGDNLICGSYDSKLAWFDMDLSTKPYK), 643 to 682 (HHKKALRAVSFHKSYPLFASGSDDASVIVCHGMVYNDLLQ), and 698 to 728 (HRDLGVLDVMFHPTQPWVFSSGADGTIRLFT).

This sequence belongs to the WD repeat BOP1/ERB1 family. Component of the PeBoW complex, composed of bop1, pes1 and wdr12. The complex is held together by bop1, which interacts with pes1 via its N-terminal domain and with wdr12 via a high-affinity interaction between the seven-bladed beta-propeller domains of the 2 proteins. The PeBoW complex associates with the 66S pre-ribosome.

It localises to the nucleus. It is found in the nucleolus. The protein resides in the nucleoplasm. Component of the PeBoW complex, which is required for maturation of 28S and 5.8S ribosomal RNAs and formation of the 60S ribosome. The sequence is that of Ribosome biogenesis protein bop1-B (bop1-b) from Xenopus laevis (African clawed frog).